A 393-amino-acid chain; its full sequence is Acetylornithine aminotransferase (393 aa).

Residues 105–106 and F138 contribute to the pyridoxal 5'-phosphate site; that span reads GA. Position 141 (R141) interacts with N(2)-acetyl-L-ornithine. Position 224 to 227 (224 to 227) interacts with pyridoxal 5'-phosphate; that stretch reads DEVQ. K253 bears the N6-(pyridoxal phosphate)lysine mark. S281 contributes to the N(2)-acetyl-L-ornithine binding site. T282 serves as a coordination point for pyridoxal 5'-phosphate.

It belongs to the class-III pyridoxal-phosphate-dependent aminotransferase family. ArgD subfamily. In terms of assembly, homodimer. Pyridoxal 5'-phosphate is required as a cofactor.

The protein resides in the cytoplasm. It catalyses the reaction N(2)-acetyl-L-ornithine + 2-oxoglutarate = N-acetyl-L-glutamate 5-semialdehyde + L-glutamate. The protein operates within amino-acid biosynthesis; L-arginine biosynthesis; N(2)-acetyl-L-ornithine from L-glutamate: step 4/4. The protein is Acetylornithine aminotransferase of Haemophilus ducreyi (strain 35000HP / ATCC 700724).